The chain runs to 962 residues: Thrombospondin-3a (962 aa).

The N-terminal stretch at 1-23 (MEQMFVHIWVSLVVLMSVWSAQS) is a signal peptide. In terms of domain architecture, Laminin G-like spans 24 to 196 (DKKQDVPVID…MDTLKLALGG (173 aa)). In terms of domain architecture, EGF-like 1 spans 277-318 (PRSRCQPNPCFKGVSCMETFEYPGYRCGPCPDGMTGNGTHCQ). 20 disulfide bridges follow: Cys281–Cys292, Cys286–Cys303, Cys306–Cys317, Cys323–Cys335, Cys329–Cys344, Cys347–Cys371, Cys377–Cys390, Cys384–Cys399, Cys402–Cys414, Cys420–Cys434, Cys428–Cys444, Cys446–Cys457, Cys473–Cys480, Cys485–Cys505, Cys521–Cys541, Cys544–Cys564, Cys580–Cys600, Cys603–Cys623, Cys641–Cys661, and Cys684–Cys704. N-linked (GlcNAc...) asparagine glycosylation occurs at Asn313. The EGF-like 2; calcium-binding domain occupies 319–358 (DIDECSEAQPCYTPGACVNTARGFTCESCPPGMWGPPLSG). The region spanning 373-412 (DIDECVDLANACTPNSVCINIIGSFRCGQCKTGYVGNQTA) is the EGF-like 3; calcium-binding domain. The N-linked (GlcNAc...) asparagine glycan is linked to Asn409. The region spanning 416–458 (PRKSCSSLSFNPCDANAHCVMQRNGDVSCACNVGWAGNGHTCG) is the EGF-like 4 domain. 8 TSP type-3 repeats span residues 459–493 (KDTD…NSGQ), 494–529 (EDAD…NKDQ), 530–552 (QNSD…NIDQ), 553–588 (KDTD…NPMQ), 589–611 (TDRD…NPMQ), 612–649 (TDVD…NSSQ), 650–692 (LDSD…NPNQ), and 693–728 (KDSD…EVTL). Positions 548–704 (PNIDQKDTDS…SDSNGVGDVC (157 aa)) are disordered. A compositionally biased stretch (acidic residues) spans 557–570 (SNGEGDACDDDIDG). Residues 631-641 (GDGHQDTRDNC) show a composition bias toward basic and acidic residues. Asn646 carries an N-linked (GlcNAc...) asparagine glycan. The span at 652–669 (SDNDGIGDDCDEDDDNDG) shows a compositional bias: acidic residues. Residue Asn710 is glycosylated (N-linked (GlcNAc...) asparagine). Residues Cys720 and Cys941 are joined by a disulfide bond. The region spanning 732–946 (RAYQTVILDP…LRYRCNDTVP (215 aa)) is the TSP C-terminal domain. N-linked (GlcNAc...) asparagine glycosylation occurs at Asn942.

Belongs to the thrombospondin family. In terms of assembly, oligomer; disulfide-linked.

In terms of biological role, adhesive glycoprotein that mediates cell-to-cell and cell-to-matrix interactions. Can bind to fibrinogen, fibronectin, laminin and type V collagen. In Danio rerio (Zebrafish), this protein is Thrombospondin-3a (thbs3a).